The sequence spans 345 residues: Anthranilate phosphoribosyltransferase (345 aa).

5-phospho-alpha-D-ribose 1-diphosphate contacts are provided by residues Gly-84, Gly-87–Asp-88, Thr-92, Asn-94–Thr-97, Lys-112–Ser-120, and Ser-124. Gly-84 is an anthranilate binding site. Ser-96 contacts Mg(2+). Asn-115 provides a ligand contact to anthranilate. An anthranilate-binding site is contributed by Arg-170. The Mg(2+) site is built by Asp-229 and Glu-230.

It belongs to the anthranilate phosphoribosyltransferase family. In terms of assembly, homodimer. It depends on Mg(2+) as a cofactor.

The catalysed reaction is N-(5-phospho-beta-D-ribosyl)anthranilate + diphosphate = 5-phospho-alpha-D-ribose 1-diphosphate + anthranilate. It participates in amino-acid biosynthesis; L-tryptophan biosynthesis; L-tryptophan from chorismate: step 2/5. Catalyzes the transfer of the phosphoribosyl group of 5-phosphorylribose-1-pyrophosphate (PRPP) to anthranilate to yield N-(5'-phosphoribosyl)-anthranilate (PRA). This chain is Anthranilate phosphoribosyltransferase, found in Xanthomonas axonopodis pv. citri (strain 306).